Consider the following 149-residue polypeptide: Epoxide hydrolase EphG (149 aa).

Catalysis depends on aspartate 93, which acts as the Proton donor. Aspartate 122 acts as the Proton acceptor in catalysis.

The protein belongs to the limonene-1,2-epoxide hydrolase family. In terms of assembly, homodimer. Is also present as monomer in solution.

It catalyses the reaction an epoxide + H2O = an ethanediol. The enzyme catalyses 5,6alpha-epoxy-5alpha-cholestan-3beta-ol + H2O = 5alpha-cholestane-3beta,5,6beta-triol. The catalysed reaction is 5,6beta-epoxy-5beta-cholestan-3beta-ol + H2O = 5alpha-cholestane-3beta,5,6beta-triol. With respect to regulation, is inhibited by the anti-epileptic drug valpromide (Ki value of about 100 uM). In terms of biological role, epoxide hydrolase capable of hydrolyzing long or bulky lipophilic epoxides such as 9,10-epoxystearic acid and cholesterol 5,6-oxide in vitro. The physiological substrates have yet to be identified, but could be fatty acid or steroid derivatives. This is Epoxide hydrolase EphG (ephG) from Mycobacterium tuberculosis (strain ATCC 25618 / H37Rv).